A 109-amino-acid chain; its full sequence is Spermidine export protein MdtI (109 aa).

4 helical membrane-spanning segments follow: residues F6 to L26, W36 to V56, A64 to F84, and L88 to L108.

The protein belongs to the drug/metabolite transporter (DMT) superfamily. Small multidrug resistance (SMR) (TC 2.A.7.1) family. MdtI subfamily. In terms of assembly, forms a complex with MdtJ.

It is found in the cell inner membrane. Functionally, catalyzes the excretion of spermidine. The chain is Spermidine export protein MdtI from Yersinia pseudotuberculosis serotype I (strain IP32953).